A 583-amino-acid polypeptide reads, in one-letter code: Asparagine synthetase, root [glutamine-hydrolyzing] (583 aa).

Cys-2 functions as the For GATase activity in the catalytic mechanism. A Glutamine amidotransferase type-2 domain is found at 2–185 (CGILAVLGCS…PGHLYSSKDS (184 aa)). L-glutamine is bound by residues 50–54 (RLAIV), 75–77 (NGE), and Asp-98. Residues Leu-231, Val-267, and 341–342 (SG) contribute to the ATP site. Residues 237 to 516 (DSSLVASITS…PQNSARLTVP (280 aa)) enclose the Asparagine synthetase domain.

Roots.

It carries out the reaction L-aspartate + L-glutamine + ATP + H2O = L-asparagine + L-glutamate + AMP + diphosphate + H(+). It functions in the pathway amino-acid biosynthesis; L-asparagine biosynthesis; L-asparagine from L-aspartate (L-Gln route): step 1/1. In Pisum sativum (Garden pea), this protein is Asparagine synthetase, root [glutamine-hydrolyzing] (AS2).